A 358-amino-acid chain; its full sequence is Arogenate dehydrogenase 2, chloroplastic (358 aa).

Residues 1–36 (MLLHFSPAKPLISPPNLRRNSPTFLISPPRSLRIRA) constitute a chloroplast transit peptide. The Prephenate/arogenate dehydrogenase domain occupies 59–338 (LKIAVLGFGN…KKTEQKLLND (280 aa)). The disordered stretch occupies residues 336–358 (LNDGGVVPMNDISSSSSSSSSSS). Positions 348–358 (SSSSSSSSSSS) are enriched in low complexity.

It belongs to the prephenate/arogenate dehydrogenase family. Expressed in roots, stems, leaves, flowers, siliques and seeds. More abundant in seeds.

The protein resides in the plastid. The protein localises to the chloroplast. It catalyses the reaction L-arogenate + NADP(+) = L-tyrosine + CO2 + NADPH. It participates in amino-acid biosynthesis; L-tyrosine biosynthesis; L-tyrosine from L-arogenate (NADP(+) route): step 1/1. Functionally, involved in the biosynthesis of tyrosine. Has a weak prephenate dehydrogenase activity. The protein is Arogenate dehydrogenase 2, chloroplastic (TYRAAT2) of Arabidopsis thaliana (Mouse-ear cress).